The following is a 28-amino-acid chain: ALFSILRGLKKLGKMGQAFVNCEIYKKC.

A disulfide bond links Cys22 and Cys28.

As to expression, expressed by the skin glands.

Its subcellular location is the secreted. Antimicrobial activity against Gram-negative bacterium E.coli. This is Palustrin-1a from Lithobates palustris (Pickerel frog).